The chain runs to 352 residues: Ketoisovalerate oxidoreductase subunit VorB (352 aa).

As to quaternary structure, heterotrimer of the VorA, VorB and VorC subunits.

It catalyses the reaction 3-methyl-2-oxobutanoate + 2 oxidized [2Fe-2S]-[ferredoxin] + CoA = 2-methylpropanoyl-CoA + 2 reduced [2Fe-2S]-[ferredoxin] + CO2 + H(+). In Methanothermobacter thermautotrophicus (strain ATCC 29096 / DSM 1053 / JCM 10044 / NBRC 100330 / Delta H) (Methanobacterium thermoautotrophicum), this protein is Ketoisovalerate oxidoreductase subunit VorB (vorB).